Reading from the N-terminus, the 438-residue chain is Gamma-glutamyl phosphate reductase (438 aa).

Belongs to the gamma-glutamyl phosphate reductase family.

The protein resides in the cytoplasm. The enzyme catalyses L-glutamate 5-semialdehyde + phosphate + NADP(+) = L-glutamyl 5-phosphate + NADPH + H(+). It participates in amino-acid biosynthesis; L-proline biosynthesis; L-glutamate 5-semialdehyde from L-glutamate: step 2/2. Its function is as follows. Catalyzes the NADPH-dependent reduction of L-glutamate 5-phosphate into L-glutamate 5-semialdehyde and phosphate. The product spontaneously undergoes cyclization to form 1-pyrroline-5-carboxylate. The protein is Gamma-glutamyl phosphate reductase of Prochlorococcus marinus (strain MIT 9303).